The primary structure comprises 182 residues: Lipoprotein signal peptidase (182 aa).

Helical transmembrane passes span Leu-15–Ile-35, Leu-44–Gly-64, Ala-65–Ile-85, and Pro-97–Val-117. Residues Asp-140 and Asp-162 contribute to the active site. A helical transmembrane segment spans residues Trp-155 to Thr-175.

The protein belongs to the peptidase A8 family.

It is found in the cell inner membrane. It catalyses the reaction Release of signal peptides from bacterial membrane prolipoproteins. Hydrolyzes -Xaa-Yaa-Zaa-|-(S,diacylglyceryl)Cys-, in which Xaa is hydrophobic (preferably Leu), and Yaa (Ala or Ser) and Zaa (Gly or Ala) have small, neutral side chains.. The protein operates within protein modification; lipoprotein biosynthesis (signal peptide cleavage). This protein specifically catalyzes the removal of signal peptides from prolipoproteins. This Leptospira borgpetersenii serovar Hardjo-bovis (strain L550) protein is Lipoprotein signal peptidase.